The primary structure comprises 300 residues: tRNA pseudouridine synthase B (300 aa).

Asp38 functions as the Nucleophile in the catalytic mechanism.

Belongs to the pseudouridine synthase TruB family. Type 1 subfamily.

It carries out the reaction uridine(55) in tRNA = pseudouridine(55) in tRNA. Its function is as follows. Responsible for synthesis of pseudouridine from uracil-55 in the psi GC loop of transfer RNAs. This is tRNA pseudouridine synthase B from Dehalococcoides mccartyi (strain CBDB1).